The chain runs to 364 residues: Dihydroorotate dehydrogenase (quinone) (364 aa).

Residues 61–65 (AGYDK) and threonine 85 contribute to the FMN site. Residue lysine 65 coordinates substrate. 110 to 114 (NRLGF) is a substrate binding site. 2 residues coordinate FMN: asparagine 139 and asparagine 170. Asparagine 170 is a substrate binding site. Catalysis depends on serine 173, which acts as the Nucleophile. Residue asparagine 175 participates in substrate binding. FMN is bound by residues lysine 215 and serine 243. Residue 244-245 (NT) coordinates substrate. Residues glycine 266, glycine 295, and 316 to 317 (YS) contribute to the FMN site.

The protein belongs to the dihydroorotate dehydrogenase family. Type 2 subfamily. In terms of assembly, monomer. FMN serves as cofactor.

Its subcellular location is the cell membrane. The catalysed reaction is (S)-dihydroorotate + a quinone = orotate + a quinol. It functions in the pathway pyrimidine metabolism; UMP biosynthesis via de novo pathway; orotate from (S)-dihydroorotate (quinone route): step 1/1. Functionally, catalyzes the conversion of dihydroorotate to orotate with quinone as electron acceptor. In Brucella melitensis biotype 2 (strain ATCC 23457), this protein is Dihydroorotate dehydrogenase (quinone).